Reading from the N-terminus, the 311-residue chain is Aspartate carbamoyltransferase catalytic subunit (311 aa).

2 residues coordinate carbamoyl phosphate: Arg55 and Thr56. Lys83 contacts L-aspartate. Carbamoyl phosphate contacts are provided by Arg105, His133, and Gln136. L-aspartate contacts are provided by Arg166 and Arg220. Gly261 and Pro262 together coordinate carbamoyl phosphate.

This sequence belongs to the aspartate/ornithine carbamoyltransferase superfamily. ATCase family. Heterododecamer (2C3:3R2) of six catalytic PyrB chains organized as two trimers (C3), and six regulatory PyrI chains organized as three dimers (R2).

It catalyses the reaction carbamoyl phosphate + L-aspartate = N-carbamoyl-L-aspartate + phosphate + H(+). The protein operates within pyrimidine metabolism; UMP biosynthesis via de novo pathway; (S)-dihydroorotate from bicarbonate: step 2/3. In terms of biological role, catalyzes the condensation of carbamoyl phosphate and aspartate to form carbamoyl aspartate and inorganic phosphate, the committed step in the de novo pyrimidine nucleotide biosynthesis pathway. The protein is Aspartate carbamoyltransferase catalytic subunit of Chlorobium chlorochromatii (strain CaD3).